A 327-amino-acid polypeptide reads, in one-letter code: 2-methoxy-6-polyprenyl-1,4-benzoquinol methylase, mitochondrial (327 aa).

A mitochondrion-targeting transit peptide spans 1 to 49 (MAAPRSCALWSYCGRGWSWAMRGCQLLGLRSSWPGAPLSARLLPQEKRA). S-adenosyl-L-methionine-binding positions include T117, D171, and 199-200 (DA).

This sequence belongs to the class I-like SAM-binding methyltransferase superfamily. MenG/UbiE family. In terms of assembly, component of a multi-subunit COQ enzyme complex, composed of at least COQ3, COQ4, COQ5, COQ6, COQ7 and COQ9. Interacts with PYURF; the interaction is direct, stabilizes COQ5 protein and associates PYURF with COQ enzyme complex.

The protein localises to the mitochondrion inner membrane. It carries out the reaction 2-methoxy-6-(all-trans-decaprenyl)benzene-1,4-diol + S-adenosyl-L-methionine = 5-methoxy-2-methyl-3-(all-trans-decaprenyl)benzene-1,4-diol + S-adenosyl-L-homocysteine + H(+). The protein operates within cofactor biosynthesis; ubiquinone biosynthesis. Functionally, methyltransferase required for the conversion of 2-decaprenyl-6-methoxy-1,4-benzoquinol (DDMQH2) to 2-decaprenyl-3-methyl-6-methoxy-1,4-benzoquinol (DMQH2). The chain is 2-methoxy-6-polyprenyl-1,4-benzoquinol methylase, mitochondrial from Pongo abelii (Sumatran orangutan).